Consider the following 95-residue polypeptide: Small ribosomal subunit protein uS17 (95 aa).

It belongs to the universal ribosomal protein uS17 family. Part of the 30S ribosomal subunit.

Functionally, one of the primary rRNA binding proteins, it binds specifically to the 5'-end of 16S ribosomal RNA. In Mesomycoplasma hyopneumoniae (strain 7448) (Mycoplasma hyopneumoniae), this protein is Small ribosomal subunit protein uS17.